The sequence spans 342 residues: S-adenosylmethionine:tRNA ribosyltransferase-isomerase (342 aa).

This sequence belongs to the QueA family. As to quaternary structure, monomer.

It is found in the cytoplasm. The catalysed reaction is 7-aminomethyl-7-carbaguanosine(34) in tRNA + S-adenosyl-L-methionine = epoxyqueuosine(34) in tRNA + adenine + L-methionine + 2 H(+). It functions in the pathway tRNA modification; tRNA-queuosine biosynthesis. In terms of biological role, transfers and isomerizes the ribose moiety from AdoMet to the 7-aminomethyl group of 7-deazaguanine (preQ1-tRNA) to give epoxyqueuosine (oQ-tRNA). The protein is S-adenosylmethionine:tRNA ribosyltransferase-isomerase of Streptococcus pyogenes serotype M12 (strain MGAS2096).